The sequence spans 220 residues: Small ribosomal subunit protein uS3 (220 aa).

In terms of domain architecture, KH type-2 spans 43–111 (IRSYLTKTLD…QVQLNILEVK (69 aa)).

Belongs to the universal ribosomal protein uS3 family. As to quaternary structure, part of the 30S ribosomal subunit. Forms a tight complex with proteins S10 and S14.

Binds the lower part of the 30S subunit head. Binds mRNA in the 70S ribosome, positioning it for translation. The chain is Small ribosomal subunit protein uS3 from Tropheryma whipplei (strain TW08/27) (Whipple's bacillus).